Here is a 320-residue protein sequence, read N- to C-terminus: Probable carboxylesterase M8 (320 aa).

The short motif at H52 to G54 is the Involved in the stabilization of the negatively charged intermediate by the formation of the oxyanion hole element. Active-site residues include S137 and H296.

The protein belongs to the 'GDXG' lipolytic enzyme family.

It carries out the reaction a carboxylic ester + H2O = an alcohol + a carboxylate + H(+). Its pathway is secondary metabolite biosynthesis. Its function is as follows. Probable carboxylesterase; part of the gene cluster that mediates the biosynthesis of squalestatin S1 (SQS1, also known as zaragozic acid A), a heavily oxidized fungal polyketide that offers potent cholesterol lowering activity by targeting squalene synthase (SS). SQS1 is composed of a 2,8-dioxobicyclic[3.2.1]octane-3,4,5-tricarboxyclic acid core that is connected to two lipophilic polyketide arms. These initial steps feature the priming of an unusual benzoic acid starter unit onto the highly reducing polyketide synthase pks2, followed by oxaloacetate extension and product release to generate a tricarboxylic acid containing product. The phenylalanine ammonia lyase (PAL) M7 and the acyl-CoA ligase M9 are involved in transforming phenylalanine into benzoyl-CoA. The citrate synthase-like protein R3 is involved in connecting the C-alpha-carbons of the hexaketide chain and oxaloacetate to afford the tricarboxylic acid unit. The potential hydrolytic enzymes, M8 and M10, are in close proximity to pks2 and may participate in product release. On the other side, the tetraketide arm is synthesized by a the squalestatin tetraketide synthase pks1 and enzymatically esterified to the core in the last biosynthetic step, by the acetyltransferase M4. The biosynthesis of the tetraketide must involve 3 rounds of chain extension. After the first and second rounds methyl-transfer occurs, and in all rounds of extension the ketoreductase and dehydratase are active. The enoyl reductase and C-MeT of pks1 are not active in the final round of extension. The acetyltransferase M4 appears to have a broad substrate selectivity for its acyl CoA substrate, allowing the in vitro synthesis of novel squalestatins. The biosynthesis of SQS1 requires several oxidative steps likely performed by oxidoreductases M1, R1 and R2. Finally, in support of the identification of the cluster as being responsible for SQS1 production, the cluster contains a gene encoding a putative squalene synthase (SS) R6, suggesting a likely mechanism for self-resistance. This Phoma sp. (strain ATCC 20986 / MF5453) protein is Probable carboxylesterase M8.